A 540-amino-acid chain; its full sequence is Zona pellucida sperm-binding protein 4 (540 aa).

The signal sequence occupies residues 1-18 (MWLLRCVLLCVSLSLAVS). Topologically, residues 19-505 (GQHKPEAPDY…EKLRVPVDSK (487 aa)) are extracellular. The N-linked (GlcNAc...) asparagine glycan is linked to N69. One can recognise a P-type domain in the interval 141-183 (DWCDSIPARDRLPCAPSPISRGDCEGLGCCYSSEEVNSCYYGN). Residues 188–466 (HCTREGHFSI…VTCPDLSRRR (279 aa)) enclose the ZP domain. N202, N219, and N267 each carry an N-linked (GlcNAc...) asparagine glycan. T302 carries an O-linked (GalNAc...) threonine glycan. An intrachain disulfide couples C367 to C442. The propeptide at 463–540 (SRRRNFDNSS…QKSCPDQMCQ (78 aa)) is removed in mature form. N-linked (GlcNAc...) asparagine glycans are attached at residues N470 and N474. A helical transmembrane segment spans residues 506–526 (VLWVAGLSGTLILGALLVSYL). Topologically, residues 527–540 (AVKKQKSCPDQMCQ) are cytoplasmic.

It belongs to the ZP domain family. ZPB subfamily. Post-translationally, proteolytically cleaved before the transmembrane segment to yield the secreted ectodomain incorporated in the zona pellucida. As to expression, expressed in oocytes.

Its subcellular location is the zona pellucida. It is found in the cell membrane. In terms of biological role, component of the zona pellucida, an extracellular matrix surrounding oocytes which mediates sperm binding, induction of the acrosome reaction and prevents post-fertilization polyspermy. The zona pellucida is composed of 3 to 4 glycoproteins, ZP1, ZP2, ZP3, and ZP4. ZP4 may act as a sperm receptor. This is Zona pellucida sperm-binding protein 4 (ZP4) from Homo sapiens (Human).